The primary structure comprises 206 residues: dCTP deaminase, dUMP-forming (206 aa).

DCTP is bound by residues 117-122 (RSSFGR), Asp135, 143-145 (TLE), Gln163, Tyr177, Lys184, and Gln188. Glu145 serves as the catalytic Proton donor/acceptor.

The protein belongs to the dCTP deaminase family. In terms of assembly, homotrimer.

The catalysed reaction is dCTP + 2 H2O = dUMP + NH4(+) + diphosphate. It functions in the pathway pyrimidine metabolism; dUMP biosynthesis; dUMP from dCTP: step 1/1. Bifunctional enzyme that catalyzes both the deamination of dCTP to dUTP and the hydrolysis of dUTP to dUMP without releasing the toxic dUTP intermediate. This Methanococcus maripaludis (strain C6 / ATCC BAA-1332) protein is dCTP deaminase, dUMP-forming.